We begin with the raw amino-acid sequence, 940 residues long: Serine/threonine-protein kinase PLK4 (940 aa).

One can recognise a Protein kinase domain in the interval Phe-12–Met-265. Residues Leu-18 to Val-26 and Lys-41 contribute to the ATP site. Asp-136 (proton acceptor) is an active-site residue. Disordered regions lie at residues His-262–Arg-353 and Arg-409–Val-529. Positions Ser-273–Arg-305 are enriched in low complexity. Polar residues-rich tracts occupy residues Phe-337 to Asp-349, Asn-440 to Phe-465, and Gly-494 to Asn-519. Residues Cys-563 to Lys-676 form the Cryptic POLO box 1 (CPB1) domain. Residues Thr-677 to Pro-791 form the Cryptic POLO box 2 (CPB2) domain. Residues Lys-857–Asn-935 form the POLO box domain.

It belongs to the protein kinase superfamily. Ser/Thr protein kinase family. CDC5/Polo subfamily. Homodimer. In terms of processing, ubiquitinated; leading to its degradation by the proteasome.

It is found in the cytoplasm. Its subcellular location is the cytoskeleton. The protein resides in the microtubule organizing center. It localises to the centrosome. The protein localises to the centriole. It carries out the reaction L-seryl-[protein] + ATP = O-phospho-L-seryl-[protein] + ADP + H(+). The catalysed reaction is L-threonyl-[protein] + ATP = O-phospho-L-threonyl-[protein] + ADP + H(+). Its function is as follows. Serine/threonine-protein kinase that plays a central role in centriole duplication. Able to trigger procentriole formation on the surface of the parental centriole cylinder, leading to the recruitment of centriole biogenesis proteins such as sass6, cpap, ccp110, cep135 and gamma-tubulin. When overexpressed, it is able to induce centrosome amplification through the simultaneous generation of multiple procentrioles adjoining each parental centriole during S phase. Its central role in centriole replication suggests a possible role in tumorigenesis, centrosome aberrations being frequently observed in tumors. Also involved in deuterosome-mediated centriole amplification in multiciliated that can generate more than 100 centrioles. The polypeptide is Serine/threonine-protein kinase PLK4 (Danio rerio (Zebrafish)).